A 298-amino-acid polypeptide reads, in one-letter code: Diphthine methyl ester synthase (298 aa).

S-adenosyl-L-methionine-binding positions include Leu9, Asp85, Gly88, 113 to 114, Leu164, Leu222, and His247; that span reads SV.

Belongs to the diphthine synthase family.

It localises to the cytoplasm. The catalysed reaction is 2-[(3S)-amino-3-carboxypropyl]-L-histidyl-[translation elongation factor 2] + 4 S-adenosyl-L-methionine = diphthine methyl ester-[translation elongation factor 2] + 4 S-adenosyl-L-homocysteine + 3 H(+). It participates in protein modification; peptidyl-diphthamide biosynthesis. In terms of biological role, S-adenosyl-L-methionine-dependent methyltransferase that catalyzes four methylations of the modified target histidine residue in translation elongation factor 2 (EF-2), to form an intermediate called diphthine methyl ester. The four successive methylation reactions represent the second step of diphthamide biosynthesis. This chain is Diphthine methyl ester synthase (DPH5), found in Kluyveromyces lactis (strain ATCC 8585 / CBS 2359 / DSM 70799 / NBRC 1267 / NRRL Y-1140 / WM37) (Yeast).